A 252-amino-acid chain; its full sequence is 3-dehydroquinate dehydratase (252 aa).

3-dehydroquinate contacts are provided by residues serine 21, 46-48, and arginine 82; that span reads EWR. Histidine 143 (proton donor/acceptor) is an active-site residue. Lysine 170 functions as the Schiff-base intermediate with substrate in the catalytic mechanism. Arginine 213, serine 232, and glutamine 236 together coordinate 3-dehydroquinate.

Belongs to the type-I 3-dehydroquinase family. As to quaternary structure, homodimer.

The catalysed reaction is 3-dehydroquinate = 3-dehydroshikimate + H2O. It participates in metabolic intermediate biosynthesis; chorismate biosynthesis; chorismate from D-erythrose 4-phosphate and phosphoenolpyruvate: step 3/7. Functionally, involved in the third step of the chorismate pathway, which leads to the biosynthesis of aromatic amino acids. Catalyzes the cis-dehydration of 3-dehydroquinate (DHQ) and introduces the first double bond of the aromatic ring to yield 3-dehydroshikimate. The protein is 3-dehydroquinate dehydratase of Escherichia coli O17:K52:H18 (strain UMN026 / ExPEC).